The chain runs to 165 residues: V-type proton ATPase 16 kDa proteolipid subunit (165 aa).

Over 1–10 (MSSTFSGDET) the chain is Lumenal. The chain crosses the membrane as a helical span at residues 11 to 33 (APFFGFLGAAAALVFSCMGAAYG). Topologically, residues 34-55 (TAKSGVGVASMGVMRPELVMKS) are cytoplasmic. The helical transmembrane segment at 56-76 (IVPVVMAGVLGIYGLIIAVII) threads the bilayer. Residues 77–95 (STGINPKAKSYYLFDGYAH) are Lumenal-facing. A helical transmembrane segment spans residues 96 to 117 (LSSGLACGLAGLSAGMAIGIVG). The Cytoplasmic portion of the chain corresponds to 118–129 (DAGVRANAQQPK). A helical membrane pass occupies residues 130–155 (LFVGMILILIFAEALALYGLIVGIIL). Over 156–165 (SSRAGQSRAE) the chain is Lumenal.

This sequence belongs to the V-ATPase proteolipid subunit family. As to quaternary structure, V-ATPase is a heteromultimeric enzyme composed of a peripheral catalytic V1 complex (main components: subunits A, B, C, D, E, and F) attached to an integral membrane V0 proton pore complex (main component: the proteolipid protein; which is present as a hexamer that forms the proton-conducting pore).

Its subcellular location is the vacuole membrane. Functionally, proton-conducting pore forming subunit of the membrane integral V0 complex of vacuolar ATPase. V-ATPase is responsible for acidifying a variety of intracellular compartments in eukaryotic cells. The protein is V-type proton ATPase 16 kDa proteolipid subunit (CVA16-2) of Gossypium hirsutum (Upland cotton).